A 395-amino-acid chain; its full sequence is Extracellular cysteine protease (395 aa).

A signal peptide spans 1 to 30 (MKKKLSYMITIMLAFTLSLALGLFFNSAHA). The propeptide occupies 31-221 (DSLPQKNGAN…TLEYQSTRNE (191 aa)). Active-site residues include Cys245, His341, and Asn362.

The protein belongs to the peptidase C47 family. Proteolytically cleaved.

The protein resides in the secreted. The protein localises to the cell wall. Cysteine protease able to cleave elastin, insulin, myoglobin, fibronectin, fibrinogen, HMW-kininogen, alpha-1-protease inhibitor and alpha-1-antitrypsin. Along with other extracellular proteases may contribute to the colonization and infection of human tissues. This Staphylococcus epidermidis (strain ATCC 35984 / DSM 28319 / BCRC 17069 / CCUG 31568 / BM 3577 / RP62A) protein is Extracellular cysteine protease (ecpA).